A 132-amino-acid polypeptide reads, in one-letter code: Small ribosomal subunit protein uS8 (132 aa).

This sequence belongs to the universal ribosomal protein uS8 family. Part of the 30S ribosomal subunit. Contacts proteins S5 and S12.

One of the primary rRNA binding proteins, it binds directly to 16S rRNA central domain where it helps coordinate assembly of the platform of the 30S subunit. The protein is Small ribosomal subunit protein uS8 of Mycobacterium sp. (strain KMS).